The primary structure comprises 115 residues: Protein TrbA (115 aa).

The next 4 membrane-spanning stretches (helical) occupy residues 5-25, 39-59, 60-80, and 91-111; these read YLKM…GYFF, LVFL…LWFL, CGAI…AALP, and IFIC…FIRG.

Its subcellular location is the cell membrane. In Escherichia coli (strain K12), this protein is Protein TrbA (trbA).